We begin with the raw amino-acid sequence, 355 residues long: Methylthioribose-1-phosphate isomerase (355 aa).

Substrate is bound by residues 52–54 (RGA), arginine 95, and glutamine 204. The active-site Proton donor is aspartate 245. Substrate is bound at residue 255-256 (NK).

The protein belongs to the eIF-2B alpha/beta/delta subunits family. MtnA subfamily.

The catalysed reaction is 5-(methylsulfanyl)-alpha-D-ribose 1-phosphate = 5-(methylsulfanyl)-D-ribulose 1-phosphate. It participates in amino-acid biosynthesis; L-methionine biosynthesis via salvage pathway; L-methionine from S-methyl-5-thio-alpha-D-ribose 1-phosphate: step 1/6. In terms of biological role, catalyzes the interconversion of methylthioribose-1-phosphate (MTR-1-P) into methylthioribulose-1-phosphate (MTRu-1-P). The protein is Methylthioribose-1-phosphate isomerase of Acaryochloris marina (strain MBIC 11017).